We begin with the raw amino-acid sequence, 203 residues long: Membrane-spanning 4-domains subfamily A member 13 (203 aa).

4 helical membrane passes run 15 to 35, 56 to 76, 84 to 104, and 141 to 161; these read VLGVIQIMIGIYHVLMWYFLL, MGTSLWGFAFVISGAFTVKAA, ILCTMSLNILCIIITIVAASL, and FAIALLYSISSCAYLPLSSIV.

The protein belongs to the MS4A family.

It localises to the membrane. In terms of biological role, may be involved in signal transduction as a component of a multimeric receptor complex. This is Membrane-spanning 4-domains subfamily A member 13 (Ms4a13) from Mus musculus (Mouse).